The following is a 295-amino-acid chain: NAD kinase (295 aa).

Aspartate 74 (proton acceptor) is an active-site residue. NAD(+)-binding positions include 74–75 (DG), 148–149 (ND), histidine 159, arginine 176, aspartate 178, and 189–194 (TAYALS).

It belongs to the NAD kinase family. A divalent metal cation is required as a cofactor.

The protein localises to the cytoplasm. It carries out the reaction NAD(+) + ATP = ADP + NADP(+) + H(+). Involved in the regulation of the intracellular balance of NAD and NADP, and is a key enzyme in the biosynthesis of NADP. Catalyzes specifically the phosphorylation on 2'-hydroxyl of the adenosine moiety of NAD to yield NADP. The sequence is that of NAD kinase from Legionella pneumophila (strain Paris).